Reading from the N-terminus, the 104-residue chain is Large ribosomal subunit protein bL21 (104 aa).

Belongs to the bacterial ribosomal protein bL21 family. Part of the 50S ribosomal subunit. Contacts protein L20.

In terms of biological role, this protein binds to 23S rRNA in the presence of protein L20. The protein is Large ribosomal subunit protein bL21 of Tropheryma whipplei (strain TW08/27) (Whipple's bacillus).